Reading from the N-terminus, the 396-residue chain is Elongation factor Tu (396 aa).

Residues 10-206 (KPHVNVGTIG…VLDTYIPEPE (197 aa)) enclose the tr-type G domain. A G1 region spans residues 19–26 (GHVDHGKT). A GTP-binding site is contributed by 19–26 (GHVDHGKT). Mg(2+) is bound at residue Thr26. Residues 60–64 (GITIN) form a G2 region. The segment at 81 to 84 (DCPG) is G3. GTP-binding positions include 81-85 (DCPGH) and 136-139 (NKCD). A G4 region spans residues 136–139 (NKCD). A G5 region spans residues 174–176 (SAT).

This sequence belongs to the TRAFAC class translation factor GTPase superfamily. Classic translation factor GTPase family. EF-Tu/EF-1A subfamily. As to quaternary structure, monomer.

It localises to the cytoplasm. The enzyme catalyses GTP + H2O = GDP + phosphate + H(+). In terms of biological role, GTP hydrolase that promotes the GTP-dependent binding of aminoacyl-tRNA to the A-site of ribosomes during protein biosynthesis. The chain is Elongation factor Tu from Psychrobacter cryohalolentis (strain ATCC BAA-1226 / DSM 17306 / VKM B-2378 / K5).